The primary structure comprises 499 residues: Putative antiporter subunit mnhD2 (499 aa).

The next 14 membrane-spanning stretches (helical) occupy residues 3–23 (LSNL…ILVF), 33–53 (YLYL…LIYV), 79–99 (LSLI…AYGF), 109–129 (YHLP…FLTS), 131–151 (LFNL…LITL), 162–182 (IIYV…IGLL), 210–230 (ISLI…FMWL), 241–261 (LAAL…IRFF), 272–292 (IHPL…IGVI), 309–329 (IGFI…GAIF), 331–351 (LVND…LVYI), 370–390 (FGVA…FSGF), 404–424 (GNYI…YSLF), and 452–472 (ILSI…VVLN).

It belongs to the CPA3 antiporters (TC 2.A.63) subunit D family. As to quaternary structure, may form a heterooligomeric complex that consists of seven subunits: mnhA2, mnhB2, mnhC2, mnhD2, mnhE2, mnhF2 and mnhG2.

It localises to the cell membrane. Functionally, expression of the mnh2 operon in E.coli is not able to catalyze Na(+)Li(+)/H(+) antiport. It does however confer higher growth rates than the control strain at up to pH 9.5. The operon may encode an NADH-ubiquinone oxidoreductase. This chain is Putative antiporter subunit mnhD2 (mnhD2), found in Staphylococcus aureus.